Here is a 287-residue protein sequence, read N- to C-terminus: Uroplakin-3a (287 aa).

The signal sequence occupies residues 1–18 (MPPLWALLALGCLRFGSA). The Lumenal portion of the chain corresponds to 19–207 (VNLQPQLASV…DTWPGRRSGG (189 aa)). 3 N-linked (GlcNAc...) asparagine glycosylation sites follow: Asn74, Asn139, and Asn170. A helical membrane pass occupies residues 208–235 (MIVITSILGSLPFFLLVGFAGAIALSLV). The Cytoplasmic portion of the chain corresponds to 236 to 287 (DMGSSDGETTHDSQITQEAVPKSLGASESSYTSVNRGPPLDRAEVYSSKLQD). The segment at 242 to 287 (GETTHDSQITQEAVPKSLGASESSYTSVNRGPPLDRAEVYSSKLQD) is disordered. Polar residues predominate over residues 261-270 (ASESSYTSVN).

The protein belongs to the uroplakin-3 family. In terms of assembly, heterodimer with uroplakin-1B (UPK1B). As to expression, expressed in ureter.

The protein resides in the endoplasmic reticulum membrane. Component of the asymmetric unit membrane (AUM); a highly specialized biomembrane elaborated by terminally differentiated urothelial cells. May play an important role in AUM-cytoskeleton interaction in terminally differentiated urothelial cells. It also contributes to the formation of urothelial glycocalyx which may play an important role in preventing bacterial adherence. This is Uroplakin-3a (UPK3A) from Homo sapiens (Human).